The chain runs to 265 residues: RWD domain-containing protein 3 (265 aa).

Residues 7–114 (EEVAALSAIY…WTQQNLNNLI (108 aa)) enclose the RWD domain.

The protein localises to the nucleus. It is found in the cytoplasm. Its function is as follows. Enhancer of SUMO conjugation. Increases SUMO conjugation to proteins by promoting the: binding of E1 and E2 enzymes, thioester linkage between SUMO and ube2i/ubc9 and transfer of SUMO to specific target proteins which include hif1a, pias, nfkbia, nr3c1 and top1. Has no effect on ubiquitination. The polypeptide is RWD domain-containing protein 3 (rwdd3) (Xenopus tropicalis (Western clawed frog)).